Reading from the N-terminus, the 99-residue chain is uncharacterized protein (99 aa).

This is an uncharacterized protein from Salmonella typhimurium (strain LT2 / SGSC1412 / ATCC 700720).